Reading from the N-terminus, the 967-residue chain is A disintegrin and metalloproteinase with thrombospondin motifs 1 (967 aa).

Residues 1-54 (MQPEVPLGSGKLKPCSDMGDIQRAAKFRSSQSAHMLLLLLASITMLLCVRGAHG) form the signal peptide. The propeptide occupies 55-252 (RPTEEDEELV…TGPGSIRKKR (198 aa)). Residues 198–252 (RGSGGAKCGVMDEETLPTSNSGRESQNTPDQWPLRNPTPQGAGKPTGPGSIRKKR) are disordered. A Cysteine switch motif is present at residues 203–210 (AKCGVMDE). Residue C205 participates in Zn(2+) binding. A compositionally biased stretch (polar residues) spans 213 to 227 (LPTSNSGRESQNTPD). The Peptidase M12B domain maps to 258 to 467 (RYVETMLVAD…GHGECLMDKP (210 aa)). Ca(2+)-binding residues include E261, D344, and D351. Disulfide bonds link C333/C385, C362/C367, C379/C462, and C417/C446. H401 contributes to the Zn(2+) binding site. E402 is a catalytic residue. Residues H405 and H411 each contribute to the Zn(2+) site. Ca(2+) is bound by residues C462 and D465. Residues 476-558 (DLPGTLYDAN…TDMKHFATPV (83 aa)) form the Disintegrin domain. 4 disulfide bridges follow: C488-C511, C499-C521, C506-C540, and C534-C545. N-linked (GlcNAc...) asparagine glycosylation is present at N547. The 56-residue stretch at 559-614 (HGSWGPWGPWGDCSRTCGGGVQYTMRECDNPVPKNGGKYCEGKRVRYRSCNIEDCP) folds into the TSP type-1 1 domain. Disulfide bonds link C571–C608, C575–C613, and C586–C598. N-linked (GlcNAc...) asparagine glycans are attached at residues N720, N764, and N782. Residues 725–857 (KKISGTVTST…PFNAIPTFSE (133 aa)) form a spacer region. TSP type-1 domains are found at residues 854–910 (TFSE…LPCP) and 911–967 (RWQV…TQCS). An N-linked (GlcNAc...) asparagine glycan is attached at N945.

The cofactor is Zn(2+). In terms of processing, the precursor is cleaved by a furin endopeptidase. Post-translationally, glycosylated. Can be O-fucosylated by POFUT2 on a serine or a threonine residue found within the consensus sequence C1-X(2)-(S/T)-C2-G of the TSP type-1 repeat domains where C1 and C2 are the first and second cysteine residue of the repeat, respectively. Fucosylated repeats can then be further glycosylated by the addition of a beta-1,3-glucose residue by the glucosyltransferase, B3GALTL. Fucosylation mediates the efficient secretion of ADAMTS family members. Can also be C-glycosylated with one or two mannose molecules on tryptophan residues within the consensus sequence W-X-X-W of the TPRs, and N-glycosylated. These other glycosylations can also facilitate secretion.

The protein resides in the secreted. It localises to the extracellular space. Its subcellular location is the extracellular matrix. Its function is as follows. Metalloprotease which cleaves aggrecan, a cartilage proteoglycan, at the '1683-Glu-|-Leu-1684' site (within the chondroitin sulfate attachment domain), and may be involved in its turnover. Also cleaves COMP. Has angiogenic inhibitor activity. May play a critical role in follicular rupture. In Rattus norvegicus (Rat), this protein is A disintegrin and metalloproteinase with thrombospondin motifs 1 (Adamts1).